A 566-amino-acid polypeptide reads, in one-letter code: OTU domain-containing protein 5 (566 aa).

2 disordered regions span residues 1–117 and 146–175; these read MTIL…GDAL and PGHS…GAGY. Positions 11–30 are enriched in pro residues; sequence PPDADPANEPPPPGPLPPAP. Residues 32–47 show a composition bias toward gly residues; it reads RGGGVGVGGGGTGVGG. Pro residues predominate over residues 63–75; it reads ASPPPQGPLPGPP. S64 carries the post-translational modification Phosphoserine. Over residues 84 to 97 the composition is skewed to low complexity; sequence AVPPGAVAGPRPQQ. The segment covering 105–115 has biased composition (gly residues); sequence GPGGPGGGPGD. The residue at position 165 (S165) is a Phosphoserine. Y175 is subject to Phosphotyrosine. A Phosphoserine modification is found at S177. Position 195 is a phosphothreonine (T195). The OTU domain occupies 213–336; sequence FIIKQMKEDG…NIHYNSVVNP (124 aa). Residues 218–224 form a cys-loop region; that stretch reads MKEDGAC. The active site involves D221. C224 functions as the Nucleophile in the catalytic mechanism. Residues 273 to 283 form a variable-loop region; that stretch reads KRKNNCHGNHI. S323 carries the post-translational modification Phosphoserine. Positions 324-329 are his-loop; it reads YHRNIH. H329 is a catalytic residue. 2 positions are modified to phosphoserine: S332 and S370. The interval 413–497 is disordered; it reads ARQVRGPSQP…PGTSSQFSAG (85 aa). 2 stretches are compositionally biased toward low complexity: residues 425-438 and 445-457; these read ASAT…AASS and SRSP…ASSP. S447 carries the post-translational modification Phosphoserine. Residue T502 is modified to Phosphothreonine. Residue S503 is modified to Phosphoserine.

The protein belongs to the peptidase C85 family. In terms of assembly, interacts with TRAF3. Phosphorylation at Ser-177 is required for deubiquitinating activity. Phosphorylation at Ser-323, Ser-332 and Ser-503 by MTOR promotes its activity.

The protein resides in the nucleus. The enzyme catalyses Thiol-dependent hydrolysis of ester, thioester, amide, peptide and isopeptide bonds formed by the C-terminal Gly of ubiquitin (a 76-residue protein attached to proteins as an intracellular targeting signal).. Its activity is regulated as follows. Inhibited by N-ethyl-maleimide (NEM). Functionally, deubiquitinating enzyme that functions as a negative regulator of the innate immune system. Has peptidase activity towards 'Lys-48'- and 'Lys-63'-linked polyubiquitin chains. Can also cleave 'Lys-11'-linked ubiquitin chains (in vitro). Acts via TRAF3 deubiquitination and subsequent suppression of type I interferon (IFN) production. Controls neuroectodermal differentiation through cleaving 'Lys-48'-linked ubiquitin chains to counteract degradation of select chromatin regulators such as ARID1A, HDAC2 and HCF1. Acts as a positive regulator of mTORC1 and mTORC2 signaling following phosphorylation by MTOR: acts by mediating deubiquitination of BTRC, leading to its stability. The protein is OTU domain-containing protein 5 of Rattus norvegicus (Rat).